The following is a 148-amino-acid chain: Cell division protein SepF (148 aa).

It belongs to the SepF family. In terms of assembly, homodimer. Interacts with FtsZ.

It is found in the cytoplasm. Functionally, cell division protein that is part of the divisome complex and is recruited early to the Z-ring. Probably stimulates Z-ring formation, perhaps through the cross-linking of FtsZ protofilaments. Its function overlaps with FtsA. The protein is Cell division protein SepF of Alkaliphilus metalliredigens (strain QYMF).